We begin with the raw amino-acid sequence, 51 residues long: Large ribosomal subunit protein eL39 (51 aa).

The protein belongs to the eukaryotic ribosomal protein eL39 family.

This Sulfurisphaera tokodaii (strain DSM 16993 / JCM 10545 / NBRC 100140 / 7) (Sulfolobus tokodaii) protein is Large ribosomal subunit protein eL39.